Reading from the N-terminus, the 246-residue chain is Pyridoxine 5'-phosphate synthase (246 aa).

3-amino-2-oxopropyl phosphate is bound at residue Asn-12. 14 to 15 (DH) is a binding site for 1-deoxy-D-xylulose 5-phosphate. A 3-amino-2-oxopropyl phosphate-binding site is contributed by Arg-23. His-48 serves as the catalytic Proton acceptor. 1-deoxy-D-xylulose 5-phosphate contacts are provided by Arg-50 and His-55. Glu-75 functions as the Proton acceptor in the catalytic mechanism. Thr-105 contributes to the 1-deoxy-D-xylulose 5-phosphate binding site. The active-site Proton donor is His-196. Residues Gly-197 and 218-219 (GH) each bind 3-amino-2-oxopropyl phosphate.

The protein belongs to the PNP synthase family. As to quaternary structure, homooctamer; tetramer of dimers.

It is found in the cytoplasm. It catalyses the reaction 3-amino-2-oxopropyl phosphate + 1-deoxy-D-xylulose 5-phosphate = pyridoxine 5'-phosphate + phosphate + 2 H2O + H(+). Its pathway is cofactor biosynthesis; pyridoxine 5'-phosphate biosynthesis; pyridoxine 5'-phosphate from D-erythrose 4-phosphate: step 5/5. In terms of biological role, catalyzes the complicated ring closure reaction between the two acyclic compounds 1-deoxy-D-xylulose-5-phosphate (DXP) and 3-amino-2-oxopropyl phosphate (1-amino-acetone-3-phosphate or AAP) to form pyridoxine 5'-phosphate (PNP) and inorganic phosphate. The polypeptide is Pyridoxine 5'-phosphate synthase (Nitrosococcus oceani (strain ATCC 19707 / BCRC 17464 / JCM 30415 / NCIMB 11848 / C-107)).